The primary structure comprises 438 residues: Histidine--tRNA ligase (438 aa).

The protein belongs to the class-II aminoacyl-tRNA synthetase family. In terms of assembly, homodimer.

It localises to the cytoplasm. It catalyses the reaction tRNA(His) + L-histidine + ATP = L-histidyl-tRNA(His) + AMP + diphosphate + H(+). This Thermobifida fusca (strain YX) protein is Histidine--tRNA ligase (hisS).